A 247-amino-acid polypeptide reads, in one-letter code: Chaperone protein NfaE (247 aa).

A signal peptide spans 1–29; that stretch reads MKMRAVAVFTGMLTGVLSVTGLLSAGAYA. The disordered stretch occupies residues 106-125; it reads GQQSSRRRSVSTGGEFPSDR.

Belongs to the periplasmic pilus chaperone family.

The protein resides in the periplasm. Functionally, involved in the biogenesis of the NFA-I adhesin. In Escherichia coli, this protein is Chaperone protein NfaE (nfaE).